A 135-amino-acid polypeptide reads, in one-letter code: Ribonuclease VapC26 (135 aa).

Positions 1 to 118 (MIIDTSALLA…TRTILTLDRR (118 aa)) constitute a PINc domain. The Mg(2+) site is built by Asp4 and Asp97.

This sequence belongs to the PINc/VapC protein family. It depends on Mg(2+) as a cofactor.

Functionally, toxic component of a type II toxin-antitoxin (TA) system. An RNase. Upon expression in M.smegmatis inhibits colony formation. Its toxic effect is neutralized by coexpression with cognate antitoxin VapB26. This chain is Ribonuclease VapC26, found in Mycobacterium tuberculosis (strain ATCC 25618 / H37Rv).